The chain runs to 156 residues: Small ribosomal subunit protein uS10m (156 aa).

Belongs to the universal ribosomal protein uS10 family.

Its subcellular location is the mitochondrion. Ribosomal protein required for normal mitochondrial function and normal larval development. Thought to have a role in insulin/IGF signaling. The sequence is that of Small ribosomal subunit protein uS10m (mrps-10) from Caenorhabditis elegans.